The following is a 173-amino-acid chain: Crossover junction endodeoxyribonuclease RuvC (173 aa).

Active-site residues include Asp-8, Glu-67, and Asp-139. 3 residues coordinate Mg(2+): Asp-8, Glu-67, and Asp-139.

This sequence belongs to the RuvC family. Homodimer which binds Holliday junction (HJ) DNA. The HJ becomes 2-fold symmetrical on binding to RuvC with unstacked arms; it has a different conformation from HJ DNA in complex with RuvA. In the full resolvosome a probable DNA-RuvA(4)-RuvB(12)-RuvC(2) complex forms which resolves the HJ. Mg(2+) is required as a cofactor.

It is found in the cytoplasm. It catalyses the reaction Endonucleolytic cleavage at a junction such as a reciprocal single-stranded crossover between two homologous DNA duplexes (Holliday junction).. The RuvA-RuvB-RuvC complex processes Holliday junction (HJ) DNA during genetic recombination and DNA repair. Endonuclease that resolves HJ intermediates. Cleaves cruciform DNA by making single-stranded nicks across the HJ at symmetrical positions within the homologous arms, yielding a 5'-phosphate and a 3'-hydroxyl group; requires a central core of homology in the junction. The consensus cleavage sequence is 5'-(A/T)TT(C/G)-3'. Cleavage occurs on the 3'-side of the TT dinucleotide at the point of strand exchange. HJ branch migration catalyzed by RuvA-RuvB allows RuvC to scan DNA until it finds its consensus sequence, where it cleaves and resolves the cruciform DNA. The polypeptide is Crossover junction endodeoxyribonuclease RuvC (Edwardsiella ictaluri (strain 93-146)).